We begin with the raw amino-acid sequence, 91 residues long: Small ribosomal subunit protein uS19 (91 aa).

This sequence belongs to the universal ribosomal protein uS19 family.

Its function is as follows. Protein S19 forms a complex with S13 that binds strongly to the 16S ribosomal RNA. The sequence is that of Small ribosomal subunit protein uS19 from Azoarcus sp. (strain BH72).